The sequence spans 355 residues: Ubiquinone biosynthesis protein COQ4 homolog, mitochondrial (355 aa).

4 residues coordinate Zn(2+): His-134, Asp-135, His-138, and Glu-150.

Belongs to the COQ4 family. In terms of assembly, component of a multi-subunit COQ enzyme complex. The cofactor is Zn(2+).

It localises to the mitochondrion inner membrane. The enzyme catalyses a 4-hydroxy-3-methoxy-5-(all-trans-polyprenyl)benzoate + H(+) = a 2-methoxy-6-(all-trans-polyprenyl)phenol + CO2. The protein operates within cofactor biosynthesis; ubiquinone biosynthesis. In terms of biological role, lyase that catalyzes the C1-decarboxylation of 4-hydroxy-3-methoxy-5-(all-trans-polyprenyl)benzoic acid into 2-methoxy-6-(all-trans-polyprenyl)phenol during ubiquinone biosynthesis. This Plasmodium falciparum (isolate 3D7) protein is Ubiquinone biosynthesis protein COQ4 homolog, mitochondrial.